The primary structure comprises 118 residues: Acidic phospholipase A2 homolog (118 aa).

7 cysteine pairs are disulfide-bonded: Cys11-Cys70, Cys25-Cys117, Cys27-Cys43, Cys42-Cys98, Cys49-Cys91, Cys59-Cys84, and Cys77-Cys89.

Belongs to the phospholipase A2 family. Group I subfamily. A49 sub-subfamily. In terms of tissue distribution, expressed by the venom gland.

The protein localises to the secreted. Snake venom phospholipase A2 (PLA2) homolog that lacks both catalytic and neurotoxicity activities. The sequence is that of Acidic phospholipase A2 homolog from Bungarus fasciatus (Banded krait).